A 360-amino-acid polypeptide reads, in one-letter code: Decorin (360 aa).

The first 16 residues, 1 to 16 (MKATIIFLLLAQVSWA), serve as a signal peptide directing secretion. The propeptide occupies 17-30 (GPFQQRGLFDFMLE). A glycan (O-linked (Xyl...) (glycosaminoglycan) serine) is linked at Ser-34. Intrachain disulfides connect Cys-55–Cys-61 and Cys-59–Cys-68. LRR repeat units lie at residues 74-94 (DKVPKDLPPDTTLLDLQNNKI), 95-118 (TEIKDGDFKNLKNLHALILVNNKI), 119-142 (SKISPGAFTPLVKLERLYLSKNHL), 143-163 (KELPEKMPKTLQELRVHENEI), 164-187 (TKVRKAVFNGLNQMIVVELGTNPL), 188-213 (KSSGIENGAFQGMKKLSYIRIADTNI), 214-234 (TTIPPGLPPSLTELHLDGNKI), 235-258 (TKVDAASLRGLNNLAKLGLSFNSI), 259-282 (SAVDNGSLANTPHLRELHLDNNKL), 283-305 (IKVPGGLADHKYIQVVYLHNNNI), 306-335 (SAVGSNDFCPPGYNTKKASYSGVSLFSNPV), and 336-360 (QYWEIQPSTFRCVYVRSAIQLGNYK). N-linked (GlcNAc...) asparagine glycosylation occurs at Asn-212. N-linked (GlcNAc...) asparagine glycosylation is found at Asn-263 and Asn-304. A disulfide bridge connects residues Cys-314 and Cys-347.

This sequence belongs to the small leucine-rich proteoglycan (SLRP) family. SLRP class I subfamily. Binds to type I and type II collagen, fibronectin and TGF-beta. Forms a ternary complex with MFAP2 and ELN. Interacts with DPT. Post-translationally, the attached glycosaminoglycan chain can be either chondroitin sulfate or dermatan sulfate depending upon the tissue of origin.

It is found in the secreted. It localises to the extracellular space. Its subcellular location is the extracellular matrix. Functionally, may affect the rate of fibrils formation. This Equus caballus (Horse) protein is Decorin (DCN).